We begin with the raw amino-acid sequence, 689 residues long: Armadillo-like helical domain-containing protein 3 (689 aa).

The helical transmembrane segment at 520-538 threads the bilayer; the sequence is IFQLALQVVNLFNMFITYG.

The protein belongs to the ARMH3 family.

It is found in the golgi apparatus membrane. The protein resides in the cytoplasm. Its function is as follows. May be involved in Golgi maintenance and protein secretion. The chain is Armadillo-like helical domain-containing protein 3 from Danio rerio (Zebrafish).